The primary structure comprises 415 residues: Palmitoyl-acyl carrier protein thioesterase, chloroplastic (415 aa).

Composition is skewed to low complexity over residues 1 to 16 and 24 to 41; these read MVAT…LPSA and KLGN…KSTP. Residues 1 to 60 constitute a chloroplast transit peptide; sequence MVATAASSAFFPLPSADTSSRPGKLGNKPSSLSPLKPKSTPNGGLQVKANASAPPKINGS. The disordered stretch occupies residues 1-81; it reads MVATAASSAF…QEDAHSAPPP (81 aa). Catalysis depends on residues N314, H316, and C351.

It belongs to the acyl-ACP thioesterase family.

It localises to the plastid. It is found in the chloroplast. It catalyses the reaction hexadecanoyl-[ACP] + H2O = hexadecanoate + holo-[ACP] + H(+). Plays an essential role in chain termination during de novo fatty acid synthesis. High thioesterase activity for palmitoyl-ACP versus other acyl-ACPs. The chain is Palmitoyl-acyl carrier protein thioesterase, chloroplastic (FATB1) from Cuphea hookeriana (Cigar plant).